The primary structure comprises 334 residues: GTPase Obg (334 aa).

One can recognise an Obg domain in the interval 4 to 162 (FDFIDEVKKY…GWIKLELKLL (159 aa)). One can recognise an OBG-type G domain in the interval 163–330 (AEVGLVGFPN…FKDKIWKLLH (168 aa)). GTP is bound by residues 169-176 (GFPNAGKS), 194-198 (FTTLV), 216-219 (DMPG), 284-287 (SKLD), and 311-313 (SSV). Mg(2+) is bound by residues serine 176 and threonine 196.

This sequence belongs to the TRAFAC class OBG-HflX-like GTPase superfamily. OBG GTPase family. In terms of assembly, monomer. Mg(2+) serves as cofactor.

The protein localises to the cytoplasm. Its function is as follows. An essential GTPase which binds GTP, GDP and possibly (p)ppGpp with moderate affinity, with high nucleotide exchange rates and a fairly low GTP hydrolysis rate. Plays a role in control of the cell cycle, stress response, ribosome biogenesis and in those bacteria that undergo differentiation, in morphogenesis control. The polypeptide is GTPase Obg (Amoebophilus asiaticus (strain 5a2)).